Consider the following 90-residue polypeptide: RNA-binding protein Hfq (90 aa).

The region spanning Asp-9–Phe-68 is the Sm domain.

Belongs to the Hfq family. Homohexamer.

Its function is as follows. RNA chaperone that binds small regulatory RNA (sRNAs) and mRNAs to facilitate mRNA translational regulation in response to envelope stress, environmental stress and changes in metabolite concentrations. Also binds with high specificity to tRNAs. This is RNA-binding protein Hfq from Shewanella oneidensis (strain ATCC 700550 / JCM 31522 / CIP 106686 / LMG 19005 / NCIMB 14063 / MR-1).